Here is a 79-residue protein sequence, read N- to C-terminus: Polcalcin Bra r 1 (79 aa).

EF-hand domains lie at 1–36 (MADA…LGSV) and 39–71 (DDVT…NPGL). Residues Asp14, Asp16, Asp18, Lys20, Glu25, Asp49, Asp51, Asp53, Asn55, and Glu60 each coordinate Ca(2+).

The sequence is that of Polcalcin Bra r 1 from Brassica campestris (Field mustard).